A 102-amino-acid polypeptide reads, in one-letter code: Large ribosomal subunit protein bL21 (102 aa).

It belongs to the bacterial ribosomal protein bL21 family. In terms of assembly, part of the 50S ribosomal subunit. Contacts protein L20.

Functionally, this protein binds to 23S rRNA in the presence of protein L20. This is Large ribosomal subunit protein bL21 from Bifidobacterium longum (strain DJO10A).